The following is a 457-amino-acid chain: tRNA-2-methylthio-N(6)-dimethylallyladenosine synthase (457 aa).

An MTTase N-terminal domain is found at K3–E120. The [4Fe-4S] cluster site is built by C12, C49, C83, C157, C161, and C164. In terms of domain architecture, Radical SAM core spans R143–R377. The TRAM domain maps to D380–L447.

It belongs to the methylthiotransferase family. MiaB subfamily. In terms of assembly, monomer. It depends on [4Fe-4S] cluster as a cofactor.

Its subcellular location is the cytoplasm. It catalyses the reaction N(6)-dimethylallyladenosine(37) in tRNA + (sulfur carrier)-SH + AH2 + 2 S-adenosyl-L-methionine = 2-methylsulfanyl-N(6)-dimethylallyladenosine(37) in tRNA + (sulfur carrier)-H + 5'-deoxyadenosine + L-methionine + A + S-adenosyl-L-homocysteine + 2 H(+). Catalyzes the methylthiolation of N6-(dimethylallyl)adenosine (i(6)A), leading to the formation of 2-methylthio-N6-(dimethylallyl)adenosine (ms(2)i(6)A) at position 37 in tRNAs that read codons beginning with uridine. The sequence is that of tRNA-2-methylthio-N(6)-dimethylallyladenosine synthase from Paraburkholderia phytofirmans (strain DSM 17436 / LMG 22146 / PsJN) (Burkholderia phytofirmans).